Consider the following 315-residue polypeptide: MVSASGTSFFKGMLLGSISWVLITMFGQIHIRHRGQTQDHEHHHLRPPNRNDFLNTSKVILLELSKSIRVFCIIFGESEDESYWAVLKETWTKHCDKAELYDTKNDNLFNIESNDRWVQMRTAYKYVFEKYGDNYNWFFLALPTTFAVIENLKYLLFTRDASQPFYLGHTVIFGDLEYVTVEGGIVLSRELMKRLNRLLDNSETCADQSVIWKLSEDKQLAICLKYAGVHAENAEDYEGRDVFNTKPIAQLIEEALSNNPQQVVEGCCSDMAITFNGLTPQKMEVMMYGLYRLRAFGHYFNDTLVFLPPVGSEND.

Over 1–8 (MVSASGTS) the chain is Cytoplasmic. The chain crosses the membrane as a helical; Signal-anchor for type II membrane protein span at residues 9–29 (FFKGMLLGSISWVLITMFGQI). Residues 30-315 (HIRHRGQTQD…FLPPVGSEND (286 aa)) lie on the Lumenal side of the membrane. Residues Asn-55 and Asn-301 are each glycosylated (N-linked (GlcNAc...) asparagine).

This sequence belongs to the glycosyltransferase 31 family. Beta3-Gal-T subfamily.

Its subcellular location is the membrane. The protein is C1GALT1-specific chaperone 1-like protein of Homo sapiens (Human).